Here is a 391-residue protein sequence, read N- to C-terminus: Small ribosomal subunit protein bS1 (391 aa).

S1 motif domains follow at residues 16-90, 108-173, 194-262, and 279-348; these read GDKV…LSRR, NEII…LSRK, GDVI…LSIK, and NDDI…LSIK. The tract at residues 356–381 is disordered; sequence VVESDPSTTKAYLESEEEDNPTIGDM.

The protein belongs to the bacterial ribosomal protein bS1 family.

Functionally, binds mRNA; thus facilitating recognition of the initiation point. It is needed to translate mRNA with a short Shine-Dalgarno (SD) purine-rich sequence. In Staphylococcus aureus (strain MRSA252), this protein is Small ribosomal subunit protein bS1 (rpsA).